Reading from the N-terminus, the 171-residue chain is Inosine/xanthosine triphosphatase (171 aa).

8-13 (TTNPAK) contacts substrate. E38 lines the Mg(2+) pocket.

It belongs to the YjjX NTPase family. In terms of assembly, homodimer. The cofactor is Mg(2+). Mn(2+) serves as cofactor.

The catalysed reaction is XTP + H2O = XDP + phosphate + H(+). It catalyses the reaction ITP + H2O = IDP + phosphate + H(+). Its function is as follows. Phosphatase that hydrolyzes non-canonical purine nucleotides such as XTP and ITP to their respective diphosphate derivatives. Probably excludes non-canonical purines from DNA/RNA precursor pool, thus preventing their incorporation into DNA/RNA and avoiding chromosomal lesions. The polypeptide is Inosine/xanthosine triphosphatase (Klebsiella pneumoniae (strain 342)).